Consider the following 183-residue polypeptide: Small ribosomal subunit protein uS4c (183 aa).

An S4 RNA-binding domain is found at 82–143 (MRLDNILFRL…KQRSKALIQN (62 aa)).

It belongs to the universal ribosomal protein uS4 family. In terms of assembly, part of the 30S ribosomal subunit. Contacts protein S5. The interaction surface between S4 and S5 is involved in control of translational fidelity.

It localises to the plastid. The protein localises to the chloroplast. In terms of biological role, one of the primary rRNA binding proteins, it binds directly to 16S rRNA where it nucleates assembly of the body of the 30S subunit. Functionally, with S5 and S12 plays an important role in translational accuracy. The chain is Small ribosomal subunit protein uS4c (rps4) from Babiana stricta (Baboon flower).